The primary structure comprises 126 residues: Glycine cleavage system H protein (126 aa).

The 82-residue stretch at 19-100 folds into the Lipoyl-binding domain; sequence DGKIGITDHA…AHAAWMVKVE (82 aa). Lysine 60 carries the post-translational modification N6-lipoyllysine.

The protein belongs to the GcvH family. The glycine cleavage system is composed of four proteins: P, T, L and H. (R)-lipoate is required as a cofactor.

Its function is as follows. The glycine cleavage system catalyzes the degradation of glycine. The H protein shuttles the methylamine group of glycine from the P protein to the T protein. The protein is Glycine cleavage system H protein of Koribacter versatilis (strain Ellin345).